The chain runs to 308 residues: Peptidyl-prolyl cis-trans isomerase CYP8 (308 aa).

Residues 56-215 form the PPIase cyclophilin-type domain; the sequence is FTDPESSEEA…QPITIGYISS (160 aa).

It carries out the reaction [protein]-peptidylproline (omega=180) = [protein]-peptidylproline (omega=0). In terms of biological role, PPIases accelerate the folding of proteins. It catalyzes the cis-trans isomerization of proline imidic peptide bonds in oligopeptides. The chain is Peptidyl-prolyl cis-trans isomerase CYP8 (CPR8) from Saccharomyces cerevisiae (strain ATCC 204508 / S288c) (Baker's yeast).